Consider the following 78-residue polypeptide: Beta-defensin 105A (78 aa).

The N-terminal stretch at 1–27 is a signal peptide; it reads MALIRKTFYFVFAVFFILVQQPSGCQA. 3 disulfides stabilise this stretch: cysteine 43/cysteine 74, cysteine 53/cysteine 67, and cysteine 57/cysteine 73.

Belongs to the beta-defensin family.

It is found in the secreted. Its function is as follows. Has antimicrobial activity. This is Beta-defensin 105A (DEFB105A) from Macaca fascicularis (Crab-eating macaque).